A 348-amino-acid chain; its full sequence is Anthranilate phosphoribosyltransferase (348 aa).

5-phospho-alpha-D-ribose 1-diphosphate is bound by residues Gly-93, 96-97, Thr-101, 103-106, 121-129, and Ser-133; these read GD, NVST, and KHGNRAVSS. Gly-93 is a binding site for anthranilate. Mg(2+) is bound at residue Ser-105. Asn-124 provides a ligand contact to anthranilate. Arg-179 provides a ligand contact to anthranilate. 2 residues coordinate Mg(2+): Asp-238 and Glu-239.

This sequence belongs to the anthranilate phosphoribosyltransferase family. In terms of assembly, homodimer. Mg(2+) serves as cofactor.

The enzyme catalyses N-(5-phospho-beta-D-ribosyl)anthranilate + diphosphate = 5-phospho-alpha-D-ribose 1-diphosphate + anthranilate. Its pathway is amino-acid biosynthesis; L-tryptophan biosynthesis; L-tryptophan from chorismate: step 2/5. In terms of biological role, catalyzes the transfer of the phosphoribosyl group of 5-phosphorylribose-1-pyrophosphate (PRPP) to anthranilate to yield N-(5'-phosphoribosyl)-anthranilate (PRA). The sequence is that of Anthranilate phosphoribosyltransferase from Desulfotalea psychrophila (strain LSv54 / DSM 12343).